The primary structure comprises 296 residues: MKIAVYGKGGIGKSTTSCNISIALARRGKKVLQIGCDPKHDSTFTLTGFLIPTIIDTLQSKDYHYEDVWPEDVIYKGYGGVDCVEAGGPPAGAGCGGYVVGETVKLLKELNAFYEYDVILFDVLGDVVCGGFAAPLNYADYCIIITDNGFDALFAANRIAASVREKARTHPLRLAGLVGNRTSKRDLIDKYVEACPMPVLEVLPLIEDIRISRVKGKTLFEMAESEPSLDYVCEFYLNIADQLLARPEGVVPKEVPDRELFSLLSDFYLNPANNASSIEQPTDSIVQSEQEPFLII.

ATP contacts are provided by residues 10–15 (GIGKST) and K39. Residue S14 coordinates Mg(2+). Residues C95 and C129 each contribute to the [4Fe-4S] cluster site. An ATP-binding site is contributed by 180–181 (NR).

It belongs to the NifH/BchL/ChlL family. As to quaternary structure, homodimer. Protochlorophyllide reductase is composed of three subunits; ChlL, ChlN and ChlB. [4Fe-4S] cluster serves as cofactor.

The protein resides in the plastid. It localises to the chloroplast. It catalyses the reaction chlorophyllide a + oxidized 2[4Fe-4S]-[ferredoxin] + 2 ADP + 2 phosphate = protochlorophyllide a + reduced 2[4Fe-4S]-[ferredoxin] + 2 ATP + 2 H2O. It participates in porphyrin-containing compound metabolism; chlorophyll biosynthesis (light-independent). Component of the dark-operative protochlorophyllide reductase (DPOR) that uses Mg-ATP and reduced ferredoxin to reduce ring D of protochlorophyllide (Pchlide) to form chlorophyllide a (Chlide). This reaction is light-independent. The L component serves as a unique electron donor to the NB-component of the complex, and binds Mg-ATP. This chain is Light-independent protochlorophyllide reductase iron-sulfur ATP-binding protein, found in Chlorokybus atmophyticus (Soil alga).